The following is a 105-amino-acid chain: Synaptic plasticity regulator PANTS (105 aa).

It belongs to the UPF0545 family. Interacts with RTN4 isoform A/Nogo-A; the interaction results in enhanced RTN4-mediated inhibition of AMPA receptor clustering. Also interacts with NCAM1, RANBP2 and CCT8. Post-translationally, rapidly degraded by proteolysis following neuronal stimulation, resulting in increased AMPA receptor clustering.

It is found in the synapse. The protein resides in the synaptic cleft. Functionally, negatively regulates long-term potentiation and modulates adult synaptic plasticity. Stabilizes the interaction of RTN4 isoform A/Nogo-A with its receptors, inhibiting clustering of postsynaptic AMPA receptors at synaptic sites. Upon neuronal stimulation, degraded at synapses, reducing RTN4 signaling and allowing AMPA receptor clustering at individual synapses. This chain is Synaptic plasticity regulator PANTS, found in Pongo abelii (Sumatran orangutan).